Here is a 72-residue protein sequence, read N- to C-terminus: Protein SlyX homolog (72 aa).

It belongs to the SlyX family.

The chain is Protein SlyX homolog from Vibrio cholerae serotype O1 (strain ATCC 39541 / Classical Ogawa 395 / O395).